Consider the following 307-residue polypeptide: Methionyl-tRNA formyltransferase (307 aa).

108-111 (SLLP) is a binding site for (6S)-5,6,7,8-tetrahydrofolate.

Belongs to the Fmt family.

The enzyme catalyses L-methionyl-tRNA(fMet) + (6R)-10-formyltetrahydrofolate = N-formyl-L-methionyl-tRNA(fMet) + (6S)-5,6,7,8-tetrahydrofolate + H(+). In terms of biological role, attaches a formyl group to the free amino group of methionyl-tRNA(fMet). The formyl group appears to play a dual role in the initiator identity of N-formylmethionyl-tRNA by promoting its recognition by IF2 and preventing the misappropriation of this tRNA by the elongation apparatus. In Xanthomonas euvesicatoria pv. vesicatoria (strain 85-10) (Xanthomonas campestris pv. vesicatoria), this protein is Methionyl-tRNA formyltransferase.